The chain runs to 481 residues: Tripartite motif-containing protein 10 (481 aa).

An RING-type zinc finger spans residues Cys-16–Lys-61. Residues Gly-94–Leu-135 form a B box-type zinc finger. The Zn(2+) site is built by Cys-99, His-102, Cys-121, and His-127. A coiled-coil region spans residues Leu-150–Gln-177. One can recognise a B30.2/SPRY domain in the interval Arg-292–Ser-481.

It belongs to the TRIM/RBCC family. Interacts with IFNAR1; this interaction prevents association of IFNAR1 with TYK2.

Its subcellular location is the cytoplasm. Functionally, E3 ligase that plays an essential role in the differentiation and survival of terminal erythroid cells. May directly bind to PTEN and promote its ubiquitination, resulting in its proteasomal degradation and activation of hypertrophic signaling. In addition, plays a role in immune response regulation by repressing the phosphorylation of STAT1 and STAT2 in the interferon/JAK/STAT signaling pathway independent of its E3 ligase activity. Mechanistically, interacts with the intracellular domain of IFNAR1 and thereby inhibits the association between TYK2 and IFNAR1. The sequence is that of Tripartite motif-containing protein 10 (TRIM10) from Homo sapiens (Human).